The chain runs to 619 residues: 1-deoxy-D-xylulose-5-phosphate synthase (619 aa).

Thiamine diphosphate contacts are provided by residues histidine 74 and 115-117; that span reads GHS. Aspartate 146 contacts Mg(2+). Thiamine diphosphate contacts are provided by residues 147–148, asparagine 175, tyrosine 285, and glutamate 365; that span reads GA. Residue asparagine 175 participates in Mg(2+) binding.

This sequence belongs to the transketolase family. DXPS subfamily. In terms of assembly, homodimer. Mg(2+) is required as a cofactor. It depends on thiamine diphosphate as a cofactor.

The catalysed reaction is D-glyceraldehyde 3-phosphate + pyruvate + H(+) = 1-deoxy-D-xylulose 5-phosphate + CO2. It participates in metabolic intermediate biosynthesis; 1-deoxy-D-xylulose 5-phosphate biosynthesis; 1-deoxy-D-xylulose 5-phosphate from D-glyceraldehyde 3-phosphate and pyruvate: step 1/1. In terms of biological role, catalyzes the acyloin condensation reaction between C atoms 2 and 3 of pyruvate and glyceraldehyde 3-phosphate to yield 1-deoxy-D-xylulose-5-phosphate (DXP). The chain is 1-deoxy-D-xylulose-5-phosphate synthase from Clostridium perfringens (strain ATCC 13124 / DSM 756 / JCM 1290 / NCIMB 6125 / NCTC 8237 / Type A).